The primary structure comprises 268 residues: NADPH-dependent 7-cyano-7-deazaguanine reductase (268 aa).

V79–S81 contributes to the substrate binding site. Residue S81–K82 participates in NADPH binding. Catalysis depends on C176, which acts as the Thioimide intermediate. The active-site Proton donor is D183. Residue H215 to E216 coordinates substrate. Residue R244–G245 participates in NADPH binding.

The protein belongs to the GTP cyclohydrolase I family. QueF type 2 subfamily. In terms of assembly, homodimer.

Its subcellular location is the cytoplasm. The catalysed reaction is 7-aminomethyl-7-carbaguanine + 2 NADP(+) = 7-cyano-7-deazaguanine + 2 NADPH + 3 H(+). It functions in the pathway tRNA modification; tRNA-queuosine biosynthesis. Functionally, catalyzes the NADPH-dependent reduction of 7-cyano-7-deazaguanine (preQ0) to 7-aminomethyl-7-deazaguanine (preQ1). The chain is NADPH-dependent 7-cyano-7-deazaguanine reductase from Saccharophagus degradans (strain 2-40 / ATCC 43961 / DSM 17024).